A 128-amino-acid polypeptide reads, in one-letter code: Ribosome-binding factor A (128 aa).

The protein belongs to the RbfA family. As to quaternary structure, monomer. Binds 30S ribosomal subunits, but not 50S ribosomal subunits or 70S ribosomes.

It is found in the cytoplasm. One of several proteins that assist in the late maturation steps of the functional core of the 30S ribosomal subunit. Associates with free 30S ribosomal subunits (but not with 30S subunits that are part of 70S ribosomes or polysomes). Required for efficient processing of 16S rRNA. May interact with the 5'-terminal helix region of 16S rRNA. This Pseudomonas paraeruginosa (strain DSM 24068 / PA7) (Pseudomonas aeruginosa (strain PA7)) protein is Ribosome-binding factor A.